Reading from the N-terminus, the 463-residue chain is 23S rRNA (uracil(1939)-C(5))-methyltransferase RlmD (463 aa).

Residues 6–76 (KSRKPQQPEY…KRLEEAEMVA (71 aa)) enclose the TRAM domain. 4 residues coordinate [4Fe-4S] cluster: Cys90, Cys96, Cys99, and Cys178. 6 residues coordinate S-adenosyl-L-methionine: Gln288, Phe317, Asn322, Glu341, Asp368, and Asp389. The active-site Nucleophile is Cys415.

This sequence belongs to the class I-like SAM-binding methyltransferase superfamily. RNA M5U methyltransferase family. RlmD subfamily.

It carries out the reaction uridine(1939) in 23S rRNA + S-adenosyl-L-methionine = 5-methyluridine(1939) in 23S rRNA + S-adenosyl-L-homocysteine + H(+). Catalyzes the formation of 5-methyl-uridine at position 1939 (m5U1939) in 23S rRNA. The chain is 23S rRNA (uracil(1939)-C(5))-methyltransferase RlmD from Acinetobacter baumannii (strain ACICU).